We begin with the raw amino-acid sequence, 692 residues long: Glycine--tRNA ligase beta subunit (692 aa).

Belongs to the class-II aminoacyl-tRNA synthetase family. As to quaternary structure, tetramer of two alpha and two beta subunits.

Its subcellular location is the cytoplasm. It catalyses the reaction tRNA(Gly) + glycine + ATP = glycyl-tRNA(Gly) + AMP + diphosphate. The sequence is that of Glycine--tRNA ligase beta subunit from Limosilactobacillus fermentum (strain NBRC 3956 / LMG 18251) (Lactobacillus fermentum).